The following is a 386-amino-acid chain: Circumsporozoite protein (386 aa).

Positions M1 to C22 are cleaved as a signal peptide. Residues H51–K304 form a disordered region. The segment covering D72–D100 has biased composition (basic and acidic residues). A required for the binding to heparan sulfate proteoglycans (HSPGs) on the surface of host hepatocytes region spans residues K80–R88. Positions K91–P95 are region I; contains the proteolytic cleavage site. 20 tandem repeats follow at residues G96–A104, G105–A113, G114–A122, G123–A131, G132–A140, G141–A149, G150–A158, G159–A167, G168–A176, G177–A185, G186–A194, G195–A203, G204–A212, G213–A221, G222–A230, G231–A239, G240–A248, G249–A257, G258–A266, and G267–A275. Residues G96–A275 are 20 X 9 AA tandem repeats of G-D-R-A-[AD]-G-Q-P-A. A compositionally biased stretch (gly residues) spans A275–G292. Low complexity predominate over residues Q293–E303. Positions K312–A364 constitute a TSP type-1 domain. Cystine bridges form between C324–C358 and C328–C363. O-linked (Fuc) threonine glycosylation is present at T327. C363 carries GPI-anchor amidated cysteine lipidation. A propeptide spans A364–N386 (removed in mature form).

The protein belongs to the plasmodium circumsporozoite protein family. In terms of processing, during host cell invasion, proteolytically cleaved at the cell membrane in the region I by a papain-like cysteine protease of parasite origin. Cleavage is triggered by the sporozoite contact with highly sulfated heparan sulfate proteoglycans (HSPGs) present on the host hepatocyte cell surface. Cleavage exposes the TSP type-1 (TSR) domain and is required for productive invasion of host hepatocytes but not for adhesion to the host cell membrane. Cleavage is dispensable for sporozoite development in the oocyst, motility and for traversal of host and vector cells. O-glycosylated; maybe by POFUT2.

It is found in the cell membrane. The protein localises to the cytoplasm. Its function is as follows. Essential sporozoite protein. In the mosquito vector, required for sporozoite development in the oocyst, migration through the vector hemolymph and entry into the vector salivary glands. In the vertebrate host, required for sporozoite migration through the host dermis and infection of host hepatocytes. Binds to highly sulfated heparan sulfate proteoglycans (HSPGs) on the surface of host hepatocytes. Functionally, in the vertebrate host, binds to highly sulfated heparan sulfate proteoglycans (HSPGs) on the surface of host hepatocytes and is required for sporozoite invasion of the host hepatocytes. In Plasmodium simium, this protein is Circumsporozoite protein.